Here is a 129-residue protein sequence, read N- to C-terminus: Glycine cleavage system H protein (129 aa).

Positions 24-106 (EAVVGITEHA…YGAGWLFRIK (83 aa)) constitute a Lipoyl-binding domain. Position 65 is an N6-lipoyllysine (K65).

The protein belongs to the GcvH family. As to quaternary structure, the glycine cleavage system is composed of four proteins: P, T, L and H. (R)-lipoate is required as a cofactor.

Its function is as follows. The glycine cleavage system catalyzes the degradation of glycine. The H protein shuttles the methylamine group of glycine from the P protein to the T protein. This is Glycine cleavage system H protein from Aeromonas salmonicida (strain A449).